The following is a 284-amino-acid chain: Tropomyosin alpha-1 chain (284 aa).

A disordered region spans residues Met-1–Gln-38. Positions Met-1–Ile-284 form a coiled coil. Over residues Lys-12–Gln-38 the composition is skewed to basic and acidic residues.

Belongs to the tropomyosin family. In terms of assembly, homodimer. Heterodimer of an alpha (TPM1, TPM3 or TPM4) and a beta (TPM2) chain. Interacts with HRG (via the HRR domain); the interaction contributes to the antiangiogenic properties of the histidine/proline-rich region (HRR) of HRG.

The protein localises to the cytoplasm. The protein resides in the cytoskeleton. Binds to actin filaments in muscle and non-muscle cells. Plays a central role, in association with the troponin complex, in the calcium dependent regulation of vertebrate striated muscle contraction. Smooth muscle contraction is regulated by interaction with caldesmon. In non-muscle cells is implicated in stabilizing cytoskeleton actin filaments. The protein is Tropomyosin alpha-1 chain (TPM1) of Coturnix japonica (Japanese quail).